The following is a 157-amino-acid chain: UPF0254 protein MTH_1148 (157 aa).

The protein belongs to the UPF0254 family.

In Methanothermobacter thermautotrophicus (strain ATCC 29096 / DSM 1053 / JCM 10044 / NBRC 100330 / Delta H) (Methanobacterium thermoautotrophicum), this protein is UPF0254 protein MTH_1148.